Reading from the N-terminus, the 190-residue chain is Xanthine phosphoribosyltransferase (190 aa).

Leucine 20 and asparagine 27 together coordinate xanthine. 5-phospho-alpha-D-ribose 1-diphosphate is bound at residue 128 to 132; that stretch reads ANGKA. A xanthine-binding site is contributed by lysine 156.

This sequence belongs to the purine/pyrimidine phosphoribosyltransferase family. Xpt subfamily. As to quaternary structure, homodimer.

It is found in the cytoplasm. The enzyme catalyses XMP + diphosphate = xanthine + 5-phospho-alpha-D-ribose 1-diphosphate. It functions in the pathway purine metabolism; XMP biosynthesis via salvage pathway; XMP from xanthine: step 1/1. Converts the preformed base xanthine, a product of nucleic acid breakdown, to xanthosine 5'-monophosphate (XMP), so it can be reused for RNA or DNA synthesis. This Pseudomonas fluorescens (strain Pf0-1) protein is Xanthine phosphoribosyltransferase.